The primary structure comprises 429 residues: C4-dicarboxylate transport protein (429 aa).

8 helical membrane-spanning segments follow: residues 9 to 29 (VLYVQVIFAIVVGVILGHYYP), 45 to 65 (LIKMVIGPIIFCTVVTGIAGM), 79 to 99 (LLYFEIVSTFALVLGLAATHI), 149 to 169 (GEILQILLIALLFGSVLAHLG), 185 to 205 (VLFGIVHIVTKLAPIGAFGAM), 223 to 243 (LIGTFYLTSVVFVLVVLGAIA), 308 to 328 (IYMTMAVLFIAQATNIELTWM), and 356 to 376 (AATLAVVPTIPLSGMVLILGI).

Belongs to the dicarboxylate/amino acid:cation symporter (DAACS) (TC 2.A.23) family.

Its subcellular location is the cell inner membrane. Functionally, responsible for the transport of dicarboxylates such as succinate, fumarate, and malate from the periplasm across the membrane. In Burkholderia multivorans (strain ATCC 17616 / 249), this protein is C4-dicarboxylate transport protein.